A 418-amino-acid polypeptide reads, in one-letter code: Ceramide synthase LAC1 (418 aa).

Positions 1–14 (MSTIKPSPSNNNLK) are enriched in polar residues. The segment at 1–25 (MSTIKPSPSNNNLKVRSRPRRKSSI) is disordered. Position 2 is an N-acetylserine (Ser2). The Cytoplasmic portion of the chain corresponds to 2–81 (STIKPSPSNN…WFSFREISYR (80 aa)). Residues 15 to 24 (VRSRPRRKSS) are compositionally biased toward basic residues. A phosphoserine mark is found at Ser23 and Ser24. Residues 82–102 (HAWIAPLMILIAVYSAYFTSG) traverse the membrane as a helical segment. A glycan (N-linked (GlcNAc...) asparagine) is linked at Asn103. At 103–130 (NTTKTNVLHRFVAVSYQIGDTNAYGKGI) the chain is on the lumenal side. Residues 131–155 (NDLCFVFYYMIFFTFLREFLMDVVI) form a helical membrane-spanning segment. At 156 to 172 (RPFAIRLHVTSKHRIKR) the chain is on the cytoplasmic side. A TLC domain is found at 168–385 (HRIKRIMEQM…FRVLYRILWR (218 aa)). Arg169, Arg172, and Tyr182 together coordinate fumonisin B1. A helical transmembrane segment spans residues 173-194 (IMEQMYAIFYTGVSGPFGIYCM). Topologically, residues 195–217 (YHSDLWFFNTKAMYRTYPDFTNP) are lumenal. Residues 218–240 (FLFKVFYLGQAAFWAQQACILVL) form a helical membrane-spanning segment. Hexacosanoate is bound by residues Tyr224 and Trp231. Trp231 is a binding site for fumonisin B1. Residue Trp231 coordinates hexacosanoyl-CoA. Residues 241–249 (QLEKPRKDH) are Cytoplasmic-facing. Residues 250-268 (NELTFHHIVTLLLIWSSYV) form a helical membrane-spanning segment. Residue His255 participates in fumonisin B1 binding. His255, Thr259, Leu262, Ile263, Ser265, Ser266, Phe269, Phe271, Met274, Gly275, Ile278, Tyr279, Met282, Asp283, and Asp286 together coordinate hexacosanoate. 3 residues coordinate hexacosanoyl-CoA: His255, Thr259, and Leu262. Hexacosanoyl-CoA-binding residues include Ser265 and Ser266. The Lumenal portion of the chain corresponds to 269–273 (FHFTK). Positions 271, 274, 275, 278, 279, and 282 each coordinate hexacosanoyl-CoA. Residues 274–295 (MGLPIYITMDVSDFLLSFSKTL) form a helical membrane-spanning segment. Fumonisin B1 is bound by residues Asp286, Leu289, Lys293, Asn296, Tyr297, Ala303, Phe304, Phe307, and Trp314. Hexacosanoyl-CoA is bound by residues Asp286, Leu289, Lys293, and Asn296. The Cytoplasmic portion of the chain corresponds to 296–305 (NYLDSGLAFF). The chain crosses the membrane as a helical span at residues 306 to 334 (SFAIFVVAWIYLRHYINLKILWSVLTQFR). Phe307 is a binding site for hexacosanoyl-CoA. Arg318, Phe343, Tyr348, Ile352, Ser353, Ile356, Val357, Leu360, Ile361, and Trp371 together coordinate hexacosanoate. Arg318 is a binding site for hexacosanoyl-CoA. Residues 335–353 (TEGNYVLNFATQQYKCWIS) lie on the Lumenal side of the membrane. Positions 348, 352, 353, 356, 357, and 360 each coordinate hexacosanoyl-CoA. Residues 354–382 (LPIVFVLIGALQLVNLYWLFLIFRVLYRI) form a helical membrane-spanning segment. Residues Trp371, Ile375, Val378, Ile382, and Arg385 each coordinate fumonisin B1. Trp371 provides a ligand contact to hexacosanoyl-CoA. Residues 383–418 (LWRGILKDDRSDSESDEESDESSTTPTDSTPTKKDI) are Cytoplasmic-facing. The disordered stretch occupies residues 390 to 418 (DDRSDSESDEESDESSTTPTDSTPTKKDI).

Belongs to the sphingosine N-acyltransferase family. Component of the ceramide synthase complex composed of at least LAC1, LAG1 and LIP1. Forms a heterotetrameric complex, where one unit of the LIP1 homodimer interacts with LAC1 and the other with either LAC1 or LAG1. Post-translationally, phosphorylated; phosphorylation is induced upon disruption of sphingolipid synthesis. Phosphorylation is inhibited by exogenous addition of phytosphingosine.

It is found in the endoplasmic reticulum membrane. It carries out the reaction a very long-chain fatty acyl-CoA + a sphingoid base = an N-(very-long-chain fatty acyl)-sphingoid base + CoA + H(+). The catalysed reaction is hexacosanoyl-CoA + sphinganine = N-hexacosanoylsphinganine + CoA + H(+). The enzyme catalyses eicosanoyl-CoA + sphinganine = N-eicosanoylsphinganine + CoA + H(+). It catalyses the reaction a fatty acyl-CoA + sphinganine = an N-acylsphinganine + CoA + H(+). It carries out the reaction (4R)-hydroxysphinganine + a fatty acyl-CoA = an N-acyl-(4R)-4-hydroxysphinganine + CoA + H(+). It participates in lipid metabolism; sphingolipid metabolism. As part of the ceramide synthase complex, inhibited by the sphinganine analog mycotoxin, fumonisin B1 (FB1). Activated by ACB1, as part of the ceramide synthase complex. Functionally, component of the ceramide synthase complex that catalyzes the transfer of the acyl chain from acyl-CoA to a sphingoid base, with high selectivity toward hexacosanoyl-CoA (C26:0-CoA). N-acylates sphinganine and phytosphingosine bases to form dihydroceramides and phytoceramides, respectively. Redundant with LAG1. Facilitates ER-to-Golgi transport of GPI-anchored proteins. Has a lower affinity for phytosphingosine (PHS) than dihydrosphingosine (DHS); PHS is required for the synthesis of phytoceramides and the formation of nuclear envelopes. Along with LAG1, plays a role in pheromone-induced MAP kinase-activation of mating and formation of diploid cells. May also play a role, together with LAG1, in the polarized membrane distribution of phosphatidylinositol 4,5 biphosphate required for STE5 localization to the plasma membrane. The sequence is that of Ceramide synthase LAC1 (LAC1) from Saccharomyces cerevisiae (strain ATCC 204508 / S288c) (Baker's yeast).